Reading from the N-terminus, the 280-residue chain is Phosphate import ATP-binding protein PstB (280 aa).

The 242-residue stretch at Ile-34–Ile-275 folds into the ABC transporter domain. Gly-66–Ser-73 contacts ATP.

This sequence belongs to the ABC transporter superfamily. Phosphate importer (TC 3.A.1.7) family. The complex is composed of two ATP-binding proteins (PstB), two transmembrane proteins (PstC and PstA) and a solute-binding protein (PstS).

The protein localises to the cell inner membrane. The catalysed reaction is phosphate(out) + ATP + H2O = ADP + 2 phosphate(in) + H(+). Part of the ABC transporter complex PstSACB involved in phosphate import. Responsible for energy coupling to the transport system. The protein is Phosphate import ATP-binding protein PstB of Burkholderia mallei (strain ATCC 23344).